The following is a 416-amino-acid chain: Enolase (416 aa).

Residue Gln-160 coordinates (2R)-2-phosphoglycerate. The Proton donor role is filled by Glu-204. Mg(2+)-binding residues include Asp-239, Glu-280, and Asp-306. The (2R)-2-phosphoglycerate site is built by Lys-331, Arg-360, Ser-361, and Lys-382. The Proton acceptor role is filled by Lys-331.

The protein belongs to the enolase family. Requires Mg(2+) as cofactor.

The protein resides in the cytoplasm. The protein localises to the secreted. It localises to the cell surface. The enzyme catalyses (2R)-2-phosphoglycerate = phosphoenolpyruvate + H2O. It participates in carbohydrate degradation; glycolysis; pyruvate from D-glyceraldehyde 3-phosphate: step 4/5. Functionally, catalyzes the reversible conversion of 2-phosphoglycerate (2-PG) into phosphoenolpyruvate (PEP). It is essential for the degradation of carbohydrates via glycolysis. This Sulfolobus acidocaldarius (strain ATCC 33909 / DSM 639 / JCM 8929 / NBRC 15157 / NCIMB 11770) protein is Enolase.